The chain runs to 189 residues: HTH-type transcriptional repressor AcnR (189 aa).

In terms of domain architecture, HTH tetR-type spans 10–70; it reads AERKVEILSG…EVAHEDMRKM (61 aa). The H-T-H motif DNA-binding region spans 33–52; it reads TVARLEETIGKSRGAIFHHY. Citrate is bound by residues 79–80, Arg-130, and Gln-134; that span reads LI. Residue Glu-181 participates in Mg(2+) binding. Arg-185 is a binding site for citrate.

In terms of assembly, homodimer.

Its function is as follows. AcnR negatively controls the expression of the aconitase gene acn. The chain is HTH-type transcriptional repressor AcnR from Corynebacterium jeikeium (strain K411).